Consider the following 176-residue polypeptide: Protein MAL2 (176 aa).

Over 1–34 (MSAGGASVPPPPNPAVSFPPPRVTLPAGPDILRT) the chain is Cytoplasmic. The 145-residue stretch at 31 to 175 (ILRTYSGAFV…SLGLALRRWR (145 aa)) folds into the MARVEL domain. Residues 35–55 (YSGAFVCLEILFGGLVWILVA) traverse the membrane as a helical segment. Over 56-66 (SSNVPLPLLQG) the chain is Lumenal. A helical transmembrane segment spans residues 67 to 87 (WVMFVSVTAFFFSLLFLGMFL). Over 88 to 102 (SGMVAQIDANWNFLD) the chain is Cytoplasmic. The helical transmembrane segment at 103–123 (FAYHFTVFVFYFGAFLLEAAA) threads the bilayer. Over 124–149 (TSLHDLHCNTTITGQPLLSDNQYNIN) the chain is Lumenal. N-linked (GlcNAc...) asparagine glycosylation occurs at asparagine 132. The helical transmembrane segment at 150 to 170 (VAASIFAFMTTACYGCSLGLA) threads the bilayer. The Cytoplasmic segment spans residues 171-176 (LRRWRP).

It belongs to the MAL family. In terms of assembly, interacts with TPD52L2. Predominantly expressed in kidney, lung, and liver. Also found in thyroid gland, stomach and, at lower levels in testis and small intestine.

It localises to the cell membrane. The protein localises to the apical cell membrane. It is found in the endomembrane system. Its subcellular location is the cytoplasm. The protein resides in the perinuclear region. Its function is as follows. Member of the machinery of polarized transport. Required for the indirect transcytotic route at the step of the egress of the transcytosing cargo from perinuclear endosomes in order for it to travel to the apical surface via a raft-dependent pathway. The polypeptide is Protein MAL2 (MAL2) (Homo sapiens (Human)).